Consider the following 155-residue polypeptide: Endoribonuclease YbeY (155 aa).

Residues histidine 114, histidine 118, and histidine 124 each coordinate Zn(2+).

The protein belongs to the endoribonuclease YbeY family. Zn(2+) is required as a cofactor.

The protein resides in the cytoplasm. Its function is as follows. Single strand-specific metallo-endoribonuclease involved in late-stage 70S ribosome quality control and in maturation of the 3' terminus of the 16S rRNA. This chain is Endoribonuclease YbeY, found in Tolumonas auensis (strain DSM 9187 / NBRC 110442 / TA 4).